A 259-amino-acid chain; its full sequence is Short-chain dehydrogenase reductase 5 (259 aa).

Residue 12–36 (IITGGASGIGAEAARLFTDHGAKVV) coordinates NAD(+). Ser144 is a substrate binding site. The Proton acceptor role is filled by Tyr157.

This sequence belongs to the short-chain dehydrogenases/reductases (SDR) family.

This chain is Short-chain dehydrogenase reductase 5 (SDR5), found in Arabidopsis thaliana (Mouse-ear cress).